The following is a 229-amino-acid chain: Ribonuclease 3 (229 aa).

Residues 8-130 enclose the RNase III domain; sequence LTELEKIVGY…IIGAIYLDSD (123 aa). Glutamate 43 provides a ligand contact to Mg(2+). Aspartate 47 is an active-site residue. Mg(2+) contacts are provided by aspartate 116 and glutamate 119. Glutamate 119 is a catalytic residue. One can recognise a DRBM domain in the interval 157–227; sequence DPKTRLQELL…ATAALEHLQE (71 aa). A disordered region spans residues 201 to 229; that stretch reads SPFKGTGTSRRKAEQAAATAALEHLQESA.

Belongs to the ribonuclease III family. In terms of assembly, homodimer. Requires Mg(2+) as cofactor.

The protein localises to the cytoplasm. It carries out the reaction Endonucleolytic cleavage to 5'-phosphomonoester.. Its function is as follows. Digests double-stranded RNA. Involved in the processing of primary rRNA transcript to yield the immediate precursors to the large and small rRNAs (23S and 16S). Processes some mRNAs, and tRNAs when they are encoded in the rRNA operon. Processes pre-crRNA and tracrRNA of type II CRISPR loci if present in the organism. This is Ribonuclease 3 from Idiomarina loihiensis (strain ATCC BAA-735 / DSM 15497 / L2-TR).